Here is a 207-residue protein sequence, read N- to C-terminus: ADP-ribosylation factor (207 aa).

A lipid anchor (N-myristoyl glycine) is attached at G2. GTP contacts are provided by residues 32-39, 75-79, and 133-136; these read GLDGAGKT, DIGGQ, and NKID.

The protein belongs to the small GTPase superfamily. Arf family.

It is found in the golgi apparatus. In terms of biological role, GTP-binding protein involved in protein trafficking; may modulate vesicle budding and uncoating within the Golgi apparatus. The protein is ADP-ribosylation factor (ARF-1) of Encephalitozoon cuniculi (strain GB-M1) (Microsporidian parasite).